A 379-amino-acid chain; its full sequence is Cytochrome b (379 aa).

The next 4 membrane-spanning stretches (helical) occupy residues F33 to M53, W77 to I98, W113 to L133, and F178 to L198. The heme b site is built by H83 and H97. Heme b contacts are provided by H182 and H196. H201 is an a ubiquinone binding site. The next 4 helical transmembrane spans lie at Y226–S246, L288–H308, F320–G340, and F347–P367.

Belongs to the cytochrome b family. The cytochrome bc1 complex contains 3 respiratory subunits (MT-CYB, CYC1 and UQCRFS1), 2 core proteins (UQCRC1 and UQCRC2) and probably 6 low-molecular weight proteins. Heme b serves as cofactor.

Its subcellular location is the mitochondrion inner membrane. Its function is as follows. Component of the ubiquinol-cytochrome c reductase complex (complex III or cytochrome b-c1 complex) that is part of the mitochondrial respiratory chain. The b-c1 complex mediates electron transfer from ubiquinol to cytochrome c. Contributes to the generation of a proton gradient across the mitochondrial membrane that is then used for ATP synthesis. The sequence is that of Cytochrome b (MT-CYB) from Iguana iguana (Common iguana).